Here is a 156-residue protein sequence, read N- to C-terminus: Calcium-binding protein A (156 aa).

4 EF-hand domains span residues 4-39 (AITK…TGSK), 40-75 (DPLR…VAAK), 80-115 (AINN…NNPD), and 118-153 (APLM…YKSL). 18 residues coordinate Ca(2+): Asp17, Asn19, Asp21, Asn23, Glu28, Asp53, Asp55, Asp57, Glu64, Asp93, Asp95, Asp97, Arg99, Glu104, Asp131, Asp133, Asp135, and Glu142.

The sequence is that of Calcium-binding protein A (cbpA) from Dictyostelium discoideum (Social amoeba).